The sequence spans 826 residues: Prominin-1-A (826 aa).

Helical transmembrane passes span 50 to 70 (YYEP…LFVV), 106 to 126 (VVCA…GLLF), and 153 to 173 (LLTT…LCAY). Residues asparagine 178, asparagine 268, asparagine 286, asparagine 327, asparagine 388, and asparagine 404 are each glycosylated (N-linked (GlcNAc...) asparagine). The next 2 helical transmembrane spans lie at 439–459 (CMIV…ILGF) and 483–503 (VGFS…LFLA). Asparagine 576, asparagine 582, asparagine 617, and asparagine 693 each carry an N-linked (GlcNAc...) asparagine glycan.

Belongs to the prominin family.

It is found in the apical cell membrane. It localises to the cell projection. Its subcellular location is the microvillus membrane. The protein localises to the endoplasmic reticulum. The protein resides in the endoplasmic reticulum-Golgi intermediate compartment. Functionally, may play a role in cell differentiation, proliferation and apoptosis. Binds cholesterol in cholesterol-containing plasma membrane microdomains and may play a role in the organization of the apical plasma membrane in epithelial cells. Involved in regulation of MAPK and Akt signaling pathways. The polypeptide is Prominin-1-A (prom1a) (Danio rerio (Zebrafish)).